A 365-amino-acid chain; its full sequence is MTELKRTPLYEQHRRAGAKLIDFGGWEMPVQYAGVIEEHKAVRSKAGLFDVSHMGEVELKGKDSLAFLQYLLTNDVSRIQDNQIQYSPMCTSAGGVVDDLLVYRYSREHFLLVVNASNTDKDFAWMQAQAEGFEISLENRSGDFAQLALQGPWAEKILQKLTSMDLAQINYYWFKHGEVDGVLCLISRTGYTGEDGFEIYLPPEHAPRMWERILEVGGSEGVQPIGLGARDTLRFEARLPLYGNELGPDITPLEAGLGFFVKLEKDNFIGKEALSAQKEKGVPRKLVGLEMIERGIARSHYPLQKEGKEIGFITSGSFSPTLNKNIALGLIPPEYAQIGETLDVIIRGKAVKARIIPSLFYKRQG.

It belongs to the GcvT family. The glycine cleavage system is composed of four proteins: P, T, L and H.

The catalysed reaction is N(6)-[(R)-S(8)-aminomethyldihydrolipoyl]-L-lysyl-[protein] + (6S)-5,6,7,8-tetrahydrofolate = N(6)-[(R)-dihydrolipoyl]-L-lysyl-[protein] + (6R)-5,10-methylene-5,6,7,8-tetrahydrofolate + NH4(+). Functionally, the glycine cleavage system catalyzes the degradation of glycine. This chain is Aminomethyltransferase, found in Desulfitobacterium hafniense (strain DSM 10664 / DCB-2).